The following is a 632-amino-acid chain: MAU2 chromatid cohesion factor homolog (632 aa).

TPR repeat units follow at residues 453–486 (GGFY…ANAE) and 493–526 (SCSL…ASKI).

This sequence belongs to the SCC4/mau-2 family. In terms of assembly, interacts with Nipped-B to form the cohesin loading complex.

It localises to the nucleus. It is found in the nucleoplasm. Functionally, required for association of the cohesin complex with chromatin during interphase. Plays a role in sister chromatid cohesion and normal progression through prometaphase. The sequence is that of MAU2 chromatid cohesion factor homolog from Drosophila yakuba (Fruit fly).